A 75-amino-acid chain; its full sequence is Protein SlyX homolog (75 aa).

The protein belongs to the SlyX family.

The polypeptide is Protein SlyX homolog (Vibrio campbellii (strain ATCC BAA-1116)).